The following is a 424-amino-acid chain: Phosphatidylinositol transfer protein sfh5 (424 aa).

Polar residues-rich tracts occupy residues 1-16 and 50-68; these read MSVT…TTAP and ATTT…SGTA. The interval 1-98 is disordered; the sequence is MSVTMADQQP…EEKPVAQQPE (98 aa). In terms of domain architecture, CRAL-TRIO spans 188–363; the sequence is KFGGLGYLTT…VYGGSAPALQ (176 aa). Heme is bound by residues tyrosine 213, arginine 233, histidine 267, tyrosine 269, and lysine 303. The disordered stretch occupies residues 372–424; the sequence is IQDESAPAATEQSKEQANKEEAAQEESKPESAPEQPKADPDVIVQEAPAADAK. The span at 383 to 411 shows a compositional bias: basic and acidic residues; it reads QSKEQANKEEAAQEESKPESAPEQPKADP.

It belongs to the SFH5 family. The cofactor is heme b.

The protein resides in the cytoplasm. The protein localises to the endoplasmic reticulum membrane. It is found in the microsome membrane. It carries out the reaction a 1,2-diacyl-sn-glycero-3-phospho-(1D-myo-inositol)(in) = a 1,2-diacyl-sn-glycero-3-phospho-(1D-myo-inositol)(out). Functionally, non-classical phosphatidylinositol (PtdIns) transfer protein (PITP), which exhibits PtdIns-binding/transfer activity in the absence of detectable PtdCho-binding/transfer activity. Regulates PtdIns(4,5)P2 homeostasis at the plasma membrane. Heme-binding protein that may play a role in organic oxidant-induced stress responses. In Aspergillus fumigatus (strain ATCC MYA-4609 / CBS 101355 / FGSC A1100 / Af293) (Neosartorya fumigata), this protein is Phosphatidylinositol transfer protein sfh5 (sfh5).